A 257-amino-acid polypeptide reads, in one-letter code: RNA polymerase sigma-G factor (257 aa).

Residues 66 to 79 carry the Polymerase core binding motif; sequence DLFQVGCIGLIKSI. The segment at residues 228 to 247 is a DNA-binding region (H-T-H motif); it reads QMEVADEIGISQAQVSRLEK.

This sequence belongs to the sigma-70 factor family.

In terms of biological role, sigma factors are initiation factors that promote the attachment of RNA polymerase to specific initiation sites and are then released. This sigma factor is responsible for the expression of sporulation specific genes. The sequence is that of RNA polymerase sigma-G factor (sigG) from Clostridium acetobutylicum (strain ATCC 824 / DSM 792 / JCM 1419 / IAM 19013 / LMG 5710 / NBRC 13948 / NRRL B-527 / VKM B-1787 / 2291 / W).